Reading from the N-terminus, the 144-residue chain is Nucleoside diphosphate kinase (144 aa).

ATP is bound by residues K11, F59, R87, T93, R104, and N114. The active-site Pros-phosphohistidine intermediate is H117.

This sequence belongs to the NDK family. As to quaternary structure, homotetramer. It depends on Mg(2+) as a cofactor.

Its subcellular location is the cytoplasm. It carries out the reaction a 2'-deoxyribonucleoside 5'-diphosphate + ATP = a 2'-deoxyribonucleoside 5'-triphosphate + ADP. It catalyses the reaction a ribonucleoside 5'-diphosphate + ATP = a ribonucleoside 5'-triphosphate + ADP. Major role in the synthesis of nucleoside triphosphates other than ATP. The ATP gamma phosphate is transferred to the NDP beta phosphate via a ping-pong mechanism, using a phosphorylated active-site intermediate. The chain is Nucleoside diphosphate kinase from Aliivibrio salmonicida (strain LFI1238) (Vibrio salmonicida (strain LFI1238)).